We begin with the raw amino-acid sequence, 162 residues long: UPF0303 protein RL3365 (162 aa).

Belongs to the UPF0303 family.

This Rhizobium johnstonii (strain DSM 114642 / LMG 32736 / 3841) (Rhizobium leguminosarum bv. viciae) protein is UPF0303 protein RL3365.